A 292-amino-acid chain; its full sequence is Undecaprenyl-diphosphatase (292 aa).

Helical transmembrane passes span 1-21, 46-66, 90-110, 114-134, 192-212, 225-245, and 253-273; these read MSLV…FLPV, FVTI…RADI, LGWY…LLEH, ALGN…LLAA, FLLS…STVP, VVGT…LLAW, and VFVV…LSGV.

Belongs to the UppP family.

The protein resides in the cell inner membrane. It catalyses the reaction di-trans,octa-cis-undecaprenyl diphosphate + H2O = di-trans,octa-cis-undecaprenyl phosphate + phosphate + H(+). Its function is as follows. Catalyzes the dephosphorylation of undecaprenyl diphosphate (UPP). Confers resistance to bacitracin. The chain is Undecaprenyl-diphosphatase from Anaeromyxobacter sp. (strain K).